Here is a 362-residue protein sequence, read N- to C-terminus: MTKLLIALILFSICWKPYSAEPIASFFDGLDSRNECKARLDRRLTGFSGLLYSHSKYGQEPYNTSRNCVLMLVAPIGYSIRVRALQFDVASTENARTCEKDTLHVFDHETTLDPESYAPARIDDITSPGPIIGQFCGHFENRILNTSSHNALTLWWHSNPNGSNSKGFKLHWGSFRVSKTGNCVTGEFSCGNGECIPIESACDRFADCSNGEDLIHSRQMAANCQNIELDPLTTVSGVFVLLFSATIILSLCGFIMFVCCLCKCLKSTIPIKGASSHTTTTTATDYKPDPPQFYPPSPPKMPPPSAASSYTPRLHHHFEGPLVPSETSAFHSSNRMQNHYSVNSDINGDYTYVRNDVHRNLL.

A signal peptide spans 1–20 (MTKLLIALILFSICWKPYSA). Residues 21 to 237 (EPIASFFDGL…ELDPLTTVSG (217 aa)) lie on the Extracellular side of the membrane. Intrachain disulfides connect Cys-36–Cys-68 and Cys-98–Cys-136. In terms of domain architecture, CUB spans 36–175 (CKARLDRRLT…KGFKLHWGSF (140 aa)). N-linked (GlcNAc...) asparagine glycosylation is present at Asn-63. Asn-145 and Asn-161 each carry an N-linked (GlcNAc...) asparagine glycan. Positions 182-225 (NCVTGEFSCGNGECIPIESACDRFADCSNGEDLIHSRQMAANCQ) constitute an LDL-receptor class A domain. 3 disulfides stabilise this stretch: Cys-183-Cys-195, Cys-190-Cys-208, and Cys-202-Cys-224. Residues 238 to 258 (VFVLLFSATIILSLCGFIMFV) traverse the membrane as a helical segment. Over 259–362 (CCLCKCLKST…VRNDVHRNLL (104 aa)) the chain is Cytoplasmic. The interval 275 to 311 (SSHTTTTTATDYKPDPPQFYPPSPPKMPPPSAASSYT) is disordered. Residues 289–305 (DPPQFYPPSPPKMPPPS) are compositionally biased toward pro residues.

In terms of assembly, interacts with abl-1 (via SH2 and SH3 domains); the interaction is direct. Interacts with sem-5; the interaction is direct. As to expression, expressed in pharyngeal-intestinal valve cells and ventral cord neurons.

The protein localises to the cell membrane. The protein resides in the perikaryon. It localises to the cell projection. Its subcellular location is the axon. It is found in the dendrite. Its function is as follows. Probable receptor that acts as an upstream signaling protein to promote the guidance, migration and positioning of the right Q neuroblast (QR) and its descendants along the anteroposterior body axis, and also the anterior migration of BDU interneurons during larval development. Associates with and recruits the downstream components tyrosine kinase abl-1 and the tyrosine kinase adapter protein sem-5 to the leading edge of migrating Q neuroblasts and their descendants to activate signaling through the two parallel wve-1 and wsp-1 pathways, respectively, and direct migration along the anteroposterior body axis. Involved in cytoskeleton dynamics regulating the organization of the actin cytoskeleton at the leading edge of migrating cells to ensure correct Q cell polarity and promote migration. Role in cytoskeleton organization may be by activation of the wve-1 and wsp-1 pathways which recruit the Arp2/3 complex to the leading edge of migrating cells. Plays a role in regulating the asymmetric distribution of the actin cytoskeleton-binding protein cor-1 in Q neuroblasts which is required for the anterior migration of QR neuroblasts. In Caenorhabditis elegans, this protein is Abnormal cell migration protein 13.